The chain runs to 178 residues: Cytochrome b6-f complex iron-sulfur subunit (178 aa).

The chain crosses the membrane as a helical span at residues 20–42; that stretch reads LLTFGSVTGVALGALYPVANYFI. In terms of domain architecture, Rieske spans 65–161; that stretch reads ASGWLSSHPE…VSVENDNVFV (97 aa). [2Fe-2S] cluster is bound by residues C107, H109, C125, and H128. Residues C112 and C127 are joined by a disulfide bond.

This sequence belongs to the Rieske iron-sulfur protein family. In terms of assembly, the 4 large subunits of the cytochrome b6-f complex are cytochrome b6, subunit IV (17 kDa polypeptide, PetD), cytochrome f and the Rieske protein, while the 4 small subunits are PetG, PetL, PetM and PetN. The complex functions as a dimer. Requires [2Fe-2S] cluster as cofactor.

The protein localises to the cellular thylakoid membrane. It carries out the reaction 2 oxidized [plastocyanin] + a plastoquinol + 2 H(+)(in) = 2 reduced [plastocyanin] + a plastoquinone + 4 H(+)(out). In terms of biological role, component of the cytochrome b6-f complex, which mediates electron transfer between photosystem II (PSII) and photosystem I (PSI), cyclic electron flow around PSI, and state transitions. The sequence is that of Cytochrome b6-f complex iron-sulfur subunit from Synechococcus sp. (strain CC9605).